A 294-amino-acid polypeptide reads, in one-letter code: 1D-myo-inositol 2-acetamido-2-deoxy-alpha-D-glucopyranoside deacetylase (294 aa).

Positions 15, 18, and 150 each coordinate Zn(2+).

This sequence belongs to the MshB deacetylase family. Zn(2+) serves as cofactor.

The catalysed reaction is 1D-myo-inositol 2-acetamido-2-deoxy-alpha-D-glucopyranoside + H2O = 1D-myo-inositol 2-amino-2-deoxy-alpha-D-glucopyranoside + acetate. Its function is as follows. Catalyzes the deacetylation of 1D-myo-inositol 2-acetamido-2-deoxy-alpha-D-glucopyranoside (GlcNAc-Ins) in the mycothiol biosynthesis pathway. The polypeptide is 1D-myo-inositol 2-acetamido-2-deoxy-alpha-D-glucopyranoside deacetylase (Streptomyces avermitilis (strain ATCC 31267 / DSM 46492 / JCM 5070 / NBRC 14893 / NCIMB 12804 / NRRL 8165 / MA-4680)).